Here is a 456-residue protein sequence, read N- to C-terminus: Cytochrome P450 monooxygenase avaH (456 aa).

A helical membrane pass occupies residues 243-263; sequence LMSYFVSVFLVNVALFNAVSI. Heme is bound at residue cysteine 403.

Belongs to the cytochrome P450 family. Heme serves as cofactor.

It localises to the membrane. It functions in the pathway secondary metabolite biosynthesis. Its function is as follows. Cytochrome P450 monooxygenase; part of the cluster that mediates the biosynthesis of a highly modified cyclo-arginine-tryptophan dipeptide (cRW). The first step of the pathway is perfornmed by the arginine-containing cyclodipeptide synthase (RCPDS) avaA that acts as the scaffold-generating enzyme and is responsible for formation of the cyclo-Arg-Trp (cRW) diketopiperazine. AvaB then acts as a multifunctional flavoenzyme that is responsible for generating the cyclo-Arg-formylkynurenine DKP, which can be deformylated by avaC. AvaB then further catalyzes an additional N-oxidation followed by cyclization and dehydration. The next step is an N-acetylation of the guanidine group catalyzed by the arginine N-acetyltransferase avaD. The roles of the additional enzymes identified within the ava cluster still have to be determined. The polypeptide is Cytochrome P450 monooxygenase avaH (Aspergillus versicolor).